The chain runs to 300 residues: Tyrosine recombinase XerC (300 aa).

A Core-binding (CB) domain is found at 2-87 (TSLSPLLEKF…SIKSFYKYLV (86 aa)). The Tyr recombinase domain maps to 108–294 (TLPKVLPVEE…TWEQLQQVYD (187 aa)). Active-site residues include Arg-148, Lys-172, His-246, Arg-249, and His-272. Tyr-281 functions as the O-(3'-phospho-DNA)-tyrosine intermediate in the catalytic mechanism.

This sequence belongs to the 'phage' integrase family. XerC subfamily. In terms of assembly, forms a cyclic heterotetrameric complex composed of two molecules of XerC and two molecules of XerD.

The protein localises to the cytoplasm. Its function is as follows. Site-specific tyrosine recombinase, which acts by catalyzing the cutting and rejoining of the recombining DNA molecules. The XerC-XerD complex is essential to convert dimers of the bacterial chromosome into monomers to permit their segregation at cell division. It also contributes to the segregational stability of plasmids. The chain is Tyrosine recombinase XerC from Myxococcus xanthus.